Consider the following 122-residue polypeptide: Large-conductance mechanosensitive channel (122 aa).

2 consecutive transmembrane segments (helical) span residues 14 to 34 (VLDLAVGVIIGAAFTALVKSL) and 67 to 87 (GAFLNDVINFIITAFVIFILI).

This sequence belongs to the MscL family. As to quaternary structure, homopentamer.

The protein localises to the cell membrane. Functionally, channel that opens in response to stretch forces in the membrane lipid bilayer. May participate in the regulation of osmotic pressure changes within the cell. The protein is Large-conductance mechanosensitive channel of Lactococcus lactis subsp. lactis (strain IL1403) (Streptococcus lactis).